The chain runs to 373 residues: 3-isopropylmalate dehydrogenase (373 aa).

82–93 provides a ligand contact to NAD(+); it reads GPKWGTGALRPE. Residues Arg-100, Arg-110, Arg-139, and Asp-231 each coordinate substrate. Positions 231, 256, and 260 each coordinate Mg(2+). 295–306 lines the NAD(+) pocket; that stretch reads GSAPDLPANKVN.

Belongs to the isocitrate and isopropylmalate dehydrogenases family. As to quaternary structure, homodimer. The cofactor is Mg(2+). Mn(2+) is required as a cofactor.

The protein localises to the cytoplasm. It catalyses the reaction (2R,3S)-3-isopropylmalate + NAD(+) = 4-methyl-2-oxopentanoate + CO2 + NADH. The protein operates within amino-acid biosynthesis; L-leucine biosynthesis; L-leucine from 3-methyl-2-oxobutanoate: step 3/4. In terms of biological role, catalyzes the oxidation of 3-carboxy-2-hydroxy-4-methylpentanoate (3-isopropylmalate) to 3-carboxy-4-methyl-2-oxopentanoate. The product decarboxylates to 4-methyl-2 oxopentanoate. The chain is 3-isopropylmalate dehydrogenase (LEU2) from Candida maltosa (Yeast).